Reading from the N-terminus, the 284-residue chain is D-tagatose-1,6-bisphosphate aldolase subunit GatY (284 aa).

Aspartate 82 serves as the catalytic Proton donor. Residues histidine 83 and histidine 180 each coordinate Zn(2+). Cysteine 181 lines the dihydroxyacetone phosphate pocket. Histidine 208 provides a ligand contact to Zn(2+). Residues 209-211 (GAS) and 230-233 (NVAT) each bind dihydroxyacetone phosphate.

This sequence belongs to the class II fructose-bisphosphate aldolase family. TagBP aldolase GatY subfamily. As to quaternary structure, forms a complex with GatZ. The cofactor is Zn(2+).

It catalyses the reaction D-tagatofuranose 1,6-bisphosphate = D-glyceraldehyde 3-phosphate + dihydroxyacetone phosphate. It functions in the pathway carbohydrate metabolism; D-tagatose 6-phosphate degradation; D-glyceraldehyde 3-phosphate and glycerone phosphate from D-tagatose 6-phosphate: step 2/2. In terms of biological role, catalytic subunit of the tagatose-1,6-bisphosphate aldolase GatYZ, which catalyzes the reversible aldol condensation of dihydroxyacetone phosphate (DHAP or glycerone-phosphate) with glyceraldehyde 3-phosphate (G3P) to produce tagatose 1,6-bisphosphate (TBP). Requires GatZ subunit for full activity and stability. Is involved in the catabolism of galactitol. This is D-tagatose-1,6-bisphosphate aldolase subunit GatY from Salmonella paratyphi A (strain ATCC 9150 / SARB42).